A 311-amino-acid polypeptide reads, in one-letter code: Ribosomal RNA small subunit methyltransferase H (311 aa).

Residues 39–41 (GGH), aspartate 59, phenylalanine 81, aspartate 102, and histidine 109 contribute to the S-adenosyl-L-methionine site.

It belongs to the methyltransferase superfamily. RsmH family.

It is found in the cytoplasm. The catalysed reaction is cytidine(1402) in 16S rRNA + S-adenosyl-L-methionine = N(4)-methylcytidine(1402) in 16S rRNA + S-adenosyl-L-homocysteine + H(+). In terms of biological role, specifically methylates the N4 position of cytidine in position 1402 (C1402) of 16S rRNA. The polypeptide is Ribosomal RNA small subunit methyltransferase H (Porphyromonas gingivalis (strain ATCC BAA-308 / W83)).